We begin with the raw amino-acid sequence, 330 residues long: Ketol-acid reductoisomerase (NADP(+)) (330 aa).

The KARI N-terminal Rossmann domain occupies 1 to 181; that stretch reads MKVFYDSDFK…GLSRAGVIQT (181 aa). NADP(+)-binding positions include 24–27, Arg-47, Ser-52, and 82–85; these read YGSQ and DELQ. His-107 is an active-site residue. Residue Gly-133 coordinates NADP(+). The 146-residue stretch at 182 to 327 folds into the KARI C-terminal knotted domain; sequence TFKEETETDL…AKLRKMCGLE (146 aa). Residues Asp-190, Glu-194, Glu-226, and Glu-230 each coordinate Mg(2+). Residue Ser-251 coordinates substrate.

It belongs to the ketol-acid reductoisomerase family. Mg(2+) serves as cofactor.

It catalyses the reaction (2R)-2,3-dihydroxy-3-methylbutanoate + NADP(+) = (2S)-2-acetolactate + NADPH + H(+). The catalysed reaction is (2R,3R)-2,3-dihydroxy-3-methylpentanoate + NADP(+) = (S)-2-ethyl-2-hydroxy-3-oxobutanoate + NADPH + H(+). Its pathway is amino-acid biosynthesis; L-isoleucine biosynthesis; L-isoleucine from 2-oxobutanoate: step 2/4. The protein operates within amino-acid biosynthesis; L-valine biosynthesis; L-valine from pyruvate: step 2/4. Its function is as follows. Involved in the biosynthesis of branched-chain amino acids (BCAA). Catalyzes an alkyl-migration followed by a ketol-acid reduction of (S)-2-acetolactate (S2AL) to yield (R)-2,3-dihydroxy-isovalerate. In the isomerase reaction, S2AL is rearranged via a Mg-dependent methyl migration to produce 3-hydroxy-3-methyl-2-ketobutyrate (HMKB). In the reductase reaction, this 2-ketoacid undergoes a metal-dependent reduction by NADPH to yield (R)-2,3-dihydroxy-isovalerate. The polypeptide is Ketol-acid reductoisomerase (NADP(+)) (Methanococcus maripaludis (strain C5 / ATCC BAA-1333)).